The chain runs to 1075 residues: DNA-directed RNA polymerase subunit beta (1075 aa).

Belongs to the RNA polymerase beta chain family. In terms of assembly, in plastids the minimal PEP RNA polymerase catalytic core is composed of four subunits: alpha, beta, beta', and beta''. When a (nuclear-encoded) sigma factor is associated with the core the holoenzyme is formed, which can initiate transcription.

Its subcellular location is the plastid. The protein localises to the chloroplast. It carries out the reaction RNA(n) + a ribonucleoside 5'-triphosphate = RNA(n+1) + diphosphate. In terms of biological role, DNA-dependent RNA polymerase catalyzes the transcription of DNA into RNA using the four ribonucleoside triphosphates as substrates. In Sorghum bicolor (Sorghum), this protein is DNA-directed RNA polymerase subunit beta.